Here is a 199-residue protein sequence, read N- to C-terminus: MKQSHFFAHLSRLKLINRWPLMRNVRTENVSEHSLQVAMVAHALAAIKNRKFGGNVNAERIALLAMYHDASEVLTGDLPTPVKYFNSQIAQEYKAIEKIAQQKLVDMVPEELRDIFAPLIDEHAYSDEEKSLVKQADALCAYLKCLEELAAGNNEFLLAKTRLEATLEARRSQEMDYFMEVFVPSFHLSLDEISQDSPL.

Substrate-binding positions include 18-19 (RW) and His-33. The 113-residue stretch at 30-142 (VSEHSLQVAM…VKQADALCAY (113 aa)) folds into the HD domain. His-33, His-68, and Asp-69 together coordinate a divalent metal cation. Substrate-binding positions include Asp-69, 77–80 (DLPT), and Asp-137. Asp-137 is an a divalent metal cation binding site.

The protein belongs to the 5DNU family. Homodimer. It depends on a divalent metal cation as a cofactor.

The protein resides in the cytoplasm. The catalysed reaction is a 2'-deoxyribonucleoside 5'-phosphate + H2O = a 2'-deoxyribonucleoside + phosphate. Catalyzes the strictly specific dephosphorylation of 2'-deoxyribonucleoside 5'-monophosphates. The sequence is that of 5'-deoxynucleotidase YfbR from Escherichia coli (strain 55989 / EAEC).